We begin with the raw amino-acid sequence, 95 residues long: MVETKSKISFEDALMELEQIAEKLERQDFSLEESLKAYERGMELKKICQGILDTAEGKIEALTKDESKKTNKTGFRGESKTTETKNNTAQEEDLF.

The span at 62–83 (LTKDESKKTNKTGFRGESKTTE) shows a compositional bias: basic and acidic residues. The tract at residues 62–95 (LTKDESKKTNKTGFRGESKTTETKNNTAQEEDLF) is disordered.

Belongs to the XseB family. Heterooligomer composed of large and small subunits.

Its subcellular location is the cytoplasm. It carries out the reaction Exonucleolytic cleavage in either 5'- to 3'- or 3'- to 5'-direction to yield nucleoside 5'-phosphates.. Its function is as follows. Bidirectionally degrades single-stranded DNA into large acid-insoluble oligonucleotides, which are then degraded further into small acid-soluble oligonucleotides. In Leptospira interrogans serogroup Icterohaemorrhagiae serovar copenhageni (strain Fiocruz L1-130), this protein is Exodeoxyribonuclease 7 small subunit.